The following is a 227-amino-acid chain: 4-nitrobenzoate reductase (227 aa).

FMN is bound at residue 15-19 (RRAVR). NAD(+) contacts are provided by Ser-45, Tyr-102, and Ile-107. Arg-213 is a binding site for FMN.

Belongs to the nitroreductase family. It depends on FMN as a cofactor.

The enzyme catalyses 4-nitrobenzoate + 2 NADH + 2 H(+) = 4-hydroxylaminobenzoate + 2 NAD(+) + H2O. Functionally, nitroreductase involved in the degradation of nitroaromatic compounds. Catalyzes the conversion of 4-nitrobenzoate to 4-hydroxylaminobenzoate. Required for the catabolism of 4-nitrotoluene. The sequence is that of 4-nitrobenzoate reductase from Pseudomonas putida (Arthrobacter siderocapsulatus).